A 163-amino-acid chain; its full sequence is Phosphopantetheine adenylyltransferase (163 aa).

A substrate-binding site is contributed by Ser-9. ATP contacts are provided by residues 9 to 10 and His-17; that span reads SF. The substrate site is built by Lys-41, Leu-73, and Lys-87. ATP is bound by residues 88–90, Glu-98, and 124–130; these read GLR and YTYVSST.

It belongs to the bacterial CoaD family. As to quaternary structure, homohexamer. Mg(2+) is required as a cofactor.

The protein resides in the cytoplasm. It carries out the reaction (R)-4'-phosphopantetheine + ATP + H(+) = 3'-dephospho-CoA + diphosphate. It participates in cofactor biosynthesis; coenzyme A biosynthesis; CoA from (R)-pantothenate: step 4/5. In terms of biological role, reversibly transfers an adenylyl group from ATP to 4'-phosphopantetheine, yielding dephospho-CoA (dPCoA) and pyrophosphate. This chain is Phosphopantetheine adenylyltransferase, found in Fusobacterium nucleatum subsp. nucleatum (strain ATCC 25586 / DSM 15643 / BCRC 10681 / CIP 101130 / JCM 8532 / KCTC 2640 / LMG 13131 / VPI 4355).